We begin with the raw amino-acid sequence, 311 residues long: 4-hydroxy-tetrahydrodipicolinate synthase (311 aa).

Threonine 49 serves as a coordination point for pyruvate. The active-site Proton donor/acceptor is tyrosine 138. The active-site Schiff-base intermediate with substrate is lysine 166. Isoleucine 207 is a pyruvate binding site.

It belongs to the DapA family. As to quaternary structure, homotetramer; dimer of dimers.

Its subcellular location is the cytoplasm. The catalysed reaction is L-aspartate 4-semialdehyde + pyruvate = (2S,4S)-4-hydroxy-2,3,4,5-tetrahydrodipicolinate + H2O + H(+). It participates in amino-acid biosynthesis; L-lysine biosynthesis via DAP pathway; (S)-tetrahydrodipicolinate from L-aspartate: step 3/4. In terms of biological role, catalyzes the condensation of (S)-aspartate-beta-semialdehyde [(S)-ASA] and pyruvate to 4-hydroxy-tetrahydrodipicolinate (HTPA). The protein is 4-hydroxy-tetrahydrodipicolinate synthase of Lactobacillus acidophilus (strain ATCC 700396 / NCK56 / N2 / NCFM).